A 229-amino-acid chain; its full sequence is Cytidylate kinase (229 aa).

Position 10–18 (10–18 (GHSSSGKST)) interacts with ATP.

Belongs to the cytidylate kinase family. Type 1 subfamily.

The protein resides in the cytoplasm. It catalyses the reaction CMP + ATP = CDP + ADP. The catalysed reaction is dCMP + ATP = dCDP + ADP. The protein is Cytidylate kinase of Parabacteroides distasonis (strain ATCC 8503 / DSM 20701 / CIP 104284 / JCM 5825 / NCTC 11152).